Here is a 486-residue protein sequence, read N- to C-terminus: Cardiolipin synthase A (486 aa).

The next 2 membrane-spanning stretches (helical) occupy residues 3-23 (TFYT…IAGV) and 38-58 (MAWL…YLSF). 2 consecutive PLD phosphodiesterase domains span residues 219-246 (MDLR…VDPR) and 399-426 (EGGL…DMRS). Residues H224, K226, D231, H404, K406, and D411 contribute to the active site.

It belongs to the phospholipase D family. Cardiolipin synthase subfamily. ClsA sub-subfamily.

The protein localises to the cell inner membrane. It carries out the reaction 2 a 1,2-diacyl-sn-glycero-3-phospho-(1'-sn-glycerol) = a cardiolipin + glycerol. In terms of biological role, catalyzes the reversible phosphatidyl group transfer from one phosphatidylglycerol molecule to another to form cardiolipin (CL) (diphosphatidylglycerol) and glycerol. The protein is Cardiolipin synthase A of Yersinia pseudotuberculosis serotype O:3 (strain YPIII).